A 442-amino-acid chain; its full sequence is Chaperone protein dnaJ A6, chloroplastic (442 aa).

The transit peptide at 1-82 directs the protein to the chloroplast; that stretch reads MAIIQLGSTC…PRRGSRFTVR (82 aa). Positions 86–150 constitute a J domain; sequence DYYSVLGVSK…EKKSLYDRYG (65 aa). The CR-type zinc-finger motif lies at 211–292; the sequence is GMEKEIEISR…CSGDGRVRKT (82 aa). 8 residues coordinate Zn(2+): Cys224, Cys227, Cys241, Cys244, Cys267, Cys270, Cys280, and Cys283. CXXCXGXG motif repeat units follow at residues 224-231, 241-248, 267-274, and 280-287; these read CGTCEGSG, CTTCGGQG, CSSCNGTG, and CGTCSGDG.

Belongs to the DnaJ family.

It localises to the plastid. It is found in the chloroplast. Functionally, may function together with HSC70 chaperone to assist protein folding and prevent protein aggregation during heat stress in the chloroplast. In Arabidopsis thaliana (Mouse-ear cress), this protein is Chaperone protein dnaJ A6, chloroplastic.